The primary structure comprises 236 residues: Ascorbate-specific transmembrane electron transporter 2 (236 aa).

Residues 1 to 13 lie on the Cytoplasmic side of the membrane; it reads MGLGLGVRAAPFT. A helical transmembrane segment spans residues 14 to 34; sequence YAAHALAVAAAAMVLVWAIYF. A Cytochrome b561 domain is found at 15–219; the sequence is AAHALAVAAA…FGASVVVAAI (205 aa). Topologically, residues 35–50 are extracellular; that stretch reads RGGLAIEATNKNLIFN. A helical transmembrane segment spans residues 51–71; that stretch reads VHPVLMLIGYIIIGGEAIMVY. Residue His-52 participates in heme b binding. Position 67 to 75 (67 to 75) interacts with L-ascorbate; the sequence is AIMVYRVLP. Residues 72–84 lie on the Cytoplasmic side of the membrane; sequence RVLPTSNHETNKL. The chain crosses the membrane as a helical span at residues 85 to 105; the sequence is IHLVLHGIALVLGAVGIYFAF. Residues His-86 and His-120 each coordinate heme b. The Extracellular portion of the chain corresponds to 106 to 122; that stretch reads KNHNESGIANLYSLHSW. 116 to 125 provides a ligand contact to monodehydro-L-ascorbate radical; sequence LYSLHSWIGI. The helical transmembrane segment at 123 to 143 threads the bilayer; the sequence is IGIGTITLYGIQWIVGFVTFF. Topologically, residues 144–153 are cytoplasmic; that stretch reads FPGAAPNVKK. The chain crosses the membrane as a helical span at residues 154 to 174; that stretch reads GVLPWHILFGLFVYILALANA. His-159 lines the heme b pocket. The Extracellular segment spans residues 175–201; it reads ELGFLEKLTFLESSGLDKYGTEAFLVN. Residues 202 to 222 traverse the membrane as a helical segment; the sequence is FTALVVVLFGASVVVAAIAPV. At 223 to 236 the chain is on the cytoplasmic side; it reads RLEEPQGYVPIPEN.

It depends on heme b as a cofactor.

The protein resides in the membrane. In terms of biological role, two-heme-containing cytochrome. Catalyzes ascorbate-dependent trans-membrane electron transfer by utilizing a concerted H(+)/e(-) transfer mechanism. The polypeptide is Ascorbate-specific transmembrane electron transporter 2 (Zea mays (Maize)).